A 263-amino-acid chain; its full sequence is Auxin-responsive protein IAA3 (263 aa).

Disordered stretches follow at residues 1–54 (MSPP…RRPA) and 76–121 (RVFP…PAAK). The span at 28-38 (RADDVDLKGTE) shows a compositional bias: basic and acidic residues. Residues 39–43 (LRLGL) carry the EAR-like (transcriptional repression) motif. The PB1 domain occupies 158–245 (FLYVKVSMDG…SCRRLRIMKG (88 aa)).

It belongs to the Aux/IAA family. Homodimers and heterodimers. Highly expressed in flowers. Expressed in roots and shoots.

It is found in the nucleus. Functionally, aux/IAA proteins are short-lived transcriptional factors that function as repressors of early auxin response genes at low auxin concentrations. The chain is Auxin-responsive protein IAA3 (IAA3) from Oryza sativa subsp. japonica (Rice).